Reading from the N-terminus, the 295-residue chain is Polyadenylate-binding protein 2-B (295 aa).

The disordered stretch occupies residues 1–102; the sequence is MAAVSSVASL…EEPGELTGDQ (102 aa). Composition is skewed to gly residues over residues 19–31 and 71–81; these read LRGG…GGQD and GRGGSGGGAGG. A compositionally biased stretch (acidic residues) spans 83-96; sequence EELEDEELEEEEPG. Positions 106–140 form a coiled coil; sequence DPELEAIKARVREMEEEAEKLKELQNEVEKQMNMS. The interval 145–295 is necessary for homooligomerization; the sequence is NAGPVIMSVE…ARATSWYTPY (151 aa). The RRM domain occupies 162–239; it reads RSIYVGNVDY…RQIKVVPKRT (78 aa).

Monomer and homooligomer. Binds RNA as a monomer and oligomerizes when bound to poly(A).

The protein resides in the nucleus. It is found in the cytoplasm. Functionally, involved in the 3'-end formation of mRNA precursors (pre-mRNA) by the addition of a poly(A) tail of 200-250 nt to the upstream cleavage product. Stimulates poly(A) polymerase (PAPOLA) conferring processivity on the poly(A) tail elongation reaction and also controls the poly(A) tail length. Increases the affinity of poly(A) polymerase for RNA. Binds to poly(A) and to poly(G) with high affinity. May protect the poly(A) tail from degradation. The protein is Polyadenylate-binding protein 2-B (pabpn1-b) of Xenopus laevis (African clawed frog).